The following is a 567-amino-acid chain: Alpha-glucosidase (567 aa).

The signal sequence occupies residues 1–17 (MKAVIVFCLMALSIVDA). N-linked (GlcNAc...) asparagine glycosylation is found at Asn-88 and Asn-123. Asp-223 functions as the Nucleophile in the catalytic mechanism. Asn-247 carries an N-linked (GlcNAc...) asparagine glycan. Residue Glu-286 is the Proton donor of the active site. 5 N-linked (GlcNAc...) asparagine glycosylation sites follow: Asn-290, Asn-313, Asn-319, Asn-499, and Asn-507.

In terms of assembly, monomer. In terms of tissue distribution, expressed specifically in the hypopharyngeal glands of worker bees. Also found in the brain of worker bees (at protein level).

It carries out the reaction Hydrolysis of terminal, non-reducing (1-&gt;4)-linked alpha-D-glucose residues with release of alpha-D-glucose.. Functionally, converts sucrose in nectar to glucose and fructose. This Apis mellifera (Honeybee) protein is Alpha-glucosidase.